The chain runs to 130 residues: VARSWVCRKTYVTPRRPFEKSRLDQELKLIGEYGLRNKREVWRVKFTLAKIRKAARELLTLDEKDPRRLFEGNALLRRLVRIGVLDEGKMKLDYILGLKIEDFLERRLQTQVFKLGLAXSIHHXRVLIRQ.

The residue at position 64 (K64) is an N6-acetyllysine. K91 participates in a covalent cross-link: Glycyl lysine isopeptide (Lys-Gly) (interchain with G-Cter in SUMO2). The S4 RNA-binding domain maps to R106–Q130. Residue K114 is modified to N6-acetyllysine.

Belongs to the universal ribosomal protein uS4 family. Component of the small ribosomal subunit. Identified in a IGF2BP1-dependent mRNP granule complex containing untranslated mRNAs. Part of the small subunit (SSU) processome, composed of more than 70 proteins and the RNA chaperone small nucleolar RNA (snoRNA) U3.

It is found in the cytoplasm. The protein localises to the nucleus. The protein resides in the nucleolus. Functionally, component of the small ribosomal subunit. The ribosome is a large ribonucleoprotein complex responsible for the synthesis of proteins in the cell. Part of the small subunit (SSU) processome, first precursor of the small eukaryotic ribosomal subunit. During the assembly of the SSU processome in the nucleolus, many ribosome biogenesis factors, an RNA chaperone and ribosomal proteins associate with the nascent pre-rRNA and work in concert to generate RNA folding, modifications, rearrangements and cleavage as well as targeted degradation of pre-ribosomal RNA by the RNA exosome. The polypeptide is Small ribosomal subunit protein uS4 (RPS9) (Sus scrofa (Pig)).